A 249-amino-acid polypeptide reads, in one-letter code: Coproheme decarboxylase (249 aa).

Fe-coproporphyrin III contacts are provided by residues R131, 145–149 (YPMDK), H172, Q185, and S223. Y145 is a catalytic residue.

Belongs to the ChdC family. Type 1 subfamily. The cofactor is Fe-coproporphyrin III.

It catalyses the reaction Fe-coproporphyrin III + 2 H2O2 + 2 H(+) = heme b + 2 CO2 + 4 H2O. The catalysed reaction is Fe-coproporphyrin III + H2O2 + H(+) = harderoheme III + CO2 + 2 H2O. The enzyme catalyses harderoheme III + H2O2 + H(+) = heme b + CO2 + 2 H2O. The protein operates within porphyrin-containing compound metabolism; protoheme biosynthesis. Involved in coproporphyrin-dependent heme b biosynthesis. Catalyzes the decarboxylation of Fe-coproporphyrin III (coproheme) to heme b (protoheme IX), the last step of the pathway. The reaction occurs in a stepwise manner with a three-propionate intermediate. The protein is Coproheme decarboxylase of Shouchella clausii (strain KSM-K16) (Alkalihalobacillus clausii).